Reading from the N-terminus, the 2313-residue chain is MARFGEAVVARPGSGDGDSDQSRNRQGTPVPASGQAAAYKQTKAQRARTMALYNPIPVRQNCFTVNRSLFIFGEDNIVRKYAKKLIDWPPFEYMILATIIANCIVLALEQHLPEDDKTPMSRRLEKTEPYFIGIFCFEAGIKIVALGFIFHKGSYLRNGWNVMDFIVVLSGILATAGTHFNTHVDLRTLRAVRVLRPLKLVSGIPSLQIVLKSIMKAMVPLLQIGLLLFFAILMFAIIGLEFYSGKLHRACFMNNSGILEGFDPPHPCGVQGCPAGYECKDWIGPNDGITQFDNILFAVLTVFQCITMEGWTTVLYNTNDALGATWNWLYFIPLIIIGSFFVLNLVLGVLSGEFAKERERVENRRAFMKLRRQQQIERELNGYRAWIDKAEEVMLAEENKNAGTSALEVLRRATIKRSRTEAMTRDSSDEHCVDISSVGTPLARASIKSAKVDGVSYFRHKERLLRISIRHMVKSQVFYWIVLSLVALNTACVAIVHHNQPQWLTHLLYYAEFLFLGLFLLEMSLKMYGMGPRLYFHSSFNCFDFGVTVGSIFEVVWAIFRPGTSFGISVLRALRLLRIFKITKYWASLRNLVVSLMSSMKSIISLLFLLFLFIVVFALLGMQLFGGRFNFNDGTPSANFDTFPAAIMTVFQILTGEDWNEVMYNGIRSQGGVSSGMWSAIYFIVLTLFGNYTLLNVFLAIAVDNLANAQELTKDEQEEEEAFNQKHALQKAKEVSPMSAPNMPSIERDRRRRHHMSMWEPRSSHLRERRRRHHMSVWEQRTSQLRKHMQMSSQEALNREEAPTMNPLNPLNPLSSLNPLNAHPSLYRRPRAIEGLALGLALEKFEEERISRGGSLKGDGGDRSSALDNQRTPLSLGQREPPWLARPCHGNCDPTQQEAGGGEAVVTFEDRARHRQSQRRSRHRRVRTEGKESSSASRSRSASQERSLDEAMPTEGEKDHELRGNHGAKEPTIQEERAQDLRRTNSLMVSRGSGLAGGLDEADTPLVLPHPELEVGKHVVLTEQEPEGSSEQALLGNVQLDMGRVISQSEPDLSCITANTDKATTESTSVTVAIPDVDPLVDSTVVHISNKTDGEASPLKEAEIREDEEEVEKKKQKKEKRETGKAMVPHSSMFIFSTTNPIRRACHYIVNLRYFEMCILLVIAASSIALAAEDPVLTNSERNKVLRYFDYVFTGVFTFEMVIKMIDQGLILQDGSYFRDLWNILDFVVVVGALVAFALANALGTNKGRDIKTIKSLRVLRVLRPLKTIKRLPKLKAVFDCVVTSLKNVFNILIVYKLFMFIFAVIAVQLFKGKFFYCTDSSKDTEKECIGNYVDHEKNKMEVKGREWKRHEFHYDNIIWALLTLFTVSTGEGWPQVLQHSVDVTEEDRGPSRSNRMEMSIFYVVYFVVFPFFFVNIFVALIIITFQEQGDKMMEECSLEKNERACIDFAISAKPLTRYMPQNRHTFQYRVWHFVVSPSFEYTIMAMIALNTVVLMMKYYSAPCTYELALKYLNIAFTMVFSLECVLKVIAFGFLNYFRDTWNIFDFITVIGSITEIILTDSKLVNTSGFNMSFLKLFRAARLIKLLRQGYTIRILLWTFVQSFKALPYVCLLIAMLFFIYAIIGMQVFGNIKLDEESHINRHNNFRSFFGSLMLLFRSATGEAWQEIMLSCLGEKGCEPDTTAPSGQNENERCGTDLAYVYFVSFIFFCSFLMLNLFVAVIMDNFEYLTRDSSILGPHHLDEFVRVWAEYDRAACGRIHYTEMYEMLTLMSPPLGLGKRCPSKVAYKRLVLMNMPVAEDMTVHFTSTLMALIRTALDIKIAKGGADRQQLDSELQKETLAIWPHLSQKMLDLLVPMPKASDLTVGKIYAAMMIMDYYKQSKVKKQRQQLEEQKNAPMFQRMEPSSLPQEIIANAKALPYLQQDPVSGLSGRSGYPSMSPLSPQDIFQLACMDPADDGQFQERQSLEPEVSELKSVQPSNHGIYLPSDTQEHAGSGRASSMPRLTVDPQVVTDPSSMRRSFSTIRDKRSNSSWLEEFSMERSSENTYKSRRRSYHSSLRLSAHRLNSDSGHKSDTHRSGGRERGRSKERKHLLSPDVSRCNSEERGTQADWESPERRQSRSPSEGRSQTPNRQGTGSLSESSIPSVSDTSTPRRSRRQLPPVPPKPRPLLSYSSLIRHAGSISPPADGSEEGSPLTSQALESNNACLTESSNSPHPQQSQHASPQRYISEPYLALHEDSHASDCGEEETLTFEAAVATSLGRSNTIGSAPPLRHSWQMPNGHYRRRRRGGPGPGMMCGAVNNLLSDTEEDDKC.

The disordered stretch occupies residues 1-38; the sequence is MARFGEAVVARPGSGDGDSDQSRNRQGTPVPASGQAAA. Residues 1–89 lie on the Cytoplasmic side of the membrane; sequence MARFGEAVVA…KYAKKLIDWP (89 aa). Phosphoserine is present on residues Ser-14 and Ser-19. Residues 76 to 354 form an I repeat; the sequence is NIVRKYAKKL…LVLGVLSGEF (279 aa). The helical transmembrane segment at 90-108 threads the bilayer; the sequence is PFEYMILATIIANCIVLAL. Topologically, residues 109–127 are extracellular; sequence EQHLPEDDKTPMSRRLEKT. A helical membrane pass occupies residues 128 to 146; that stretch reads EPYFIGIFCFEAGIKIVAL. The Cytoplasmic portion of the chain corresponds to 147–158; sequence GFIFHKGSYLRN. Residues 159–173 form a helical membrane-spanning segment; the sequence is GWNVMDFIVVLSGIL. Residues 174 to 185 lie on the Extracellular side of the membrane; that stretch reads ATAGTHFNTHVD. The helical transmembrane segment at 186–205 threads the bilayer; it reads LRTLRAVRVLRPLKLVSGIP. At 206-223 the chain is on the cytoplasmic side; the sequence is SLQIVLKSIMKAMVPLLQ. A helical membrane pass occupies residues 224-244; it reads IGLLLFFAILMFAIIGLEFYS. At 245 to 326 the chain is on the extracellular side; the sequence is GKLHRACFMN…NTNDALGATW (82 aa). Residue Asn-254 is glycosylated (N-linked (GlcNAc...) asparagine). The chain crosses the membrane as a helical span at residues 327 to 350; the sequence is NWLYFIPLIIIGSFFVLNLVLGVL. Residues 351 to 476 are Cytoplasmic-facing; the sequence is SGEFAKERER…ISIRHMVKSQ (126 aa). Residues 374–391 are binding to the beta subunit; sequence QQIERELNGYRAWIDKAE. Residue Asp-426 coordinates Ca(2+). A Phosphoserine modification is found at Ser-427. Ca(2+) contacts are provided by Ser-428, Glu-430, and Cys-432. A Phosphothreonine modification is found at Thr-440. One copy of the II repeat lies at 462 to 706; sequence ERLLRISIRH…VFLAIAVDNL (245 aa). A helical transmembrane segment spans residues 477–496; it reads VFYWIVLSLVALNTACVAIV. At 497–509 the chain is on the extracellular side; the sequence is HHNQPQWLTHLLY. The helical transmembrane segment at 510 to 529 threads the bilayer; that stretch reads YAEFLFLGLFLLEMSLKMYG. Residues 530–538 lie on the Cytoplasmic side of the membrane; that stretch reads MGPRLYFHS. Residues 539–557 traverse the membrane as a helical segment; sequence SFNCFDFGVTVGSIFEVVW. Over 558–567 the chain is Extracellular; sequence AIFRPGTSFG. A helical membrane pass occupies residues 568 to 586; sequence ISVLRALRLLRIFKITKYW. Topologically, residues 587 to 605 are cytoplasmic; it reads ASLRNLVVSLMSSMKSIIS. The helical transmembrane segment at 606–625 threads the bilayer; it reads LLFLLFLFIVVFALLGMQLF. The Extracellular portion of the chain corresponds to 626–678; that stretch reads GGRFNFNDGTPSANFDTFPAAIMTVFQILTGEDWNEVMYNGIRSQGGVSSGMW. A helical membrane pass occupies residues 679 to 703; the sequence is SAIYFIVLTLFGNYTLLNVFLAIAV. Residues 704 to 1148 lie on the Cytoplasmic side of the membrane; sequence DNLANAQELT…TNPIRRACHY (445 aa). The tract at residues 729 to 774 is disordered; it reads LQKAKEVSPMSAPNMPSIERDRRRRHHMSMWEPRSSHLRERRRRHH. 5 positions are modified to phosphoserine: Ser-736, Ser-745, Ser-793, Ser-815, and Ser-855. Positions 851-984 are disordered; sequence SRGGSLKGDG…EERAQDLRRT (134 aa). Positions 866–875 are enriched in polar residues; that stretch reads ALDNQRTPLS. A compositionally biased stretch (basic residues) spans 913 to 926; that stretch reads RHRQSQRRSRHRRV. Residues 933-945 show a composition bias toward low complexity; it reads SSSASRSRSASQE. At Ser-947 the chain carries Phosphoserine. Over residues 955–983 the composition is skewed to basic and acidic residues; sequence EGEKDHELRGNHGAKEPTIQEERAQDLRR. Ser-1097 carries the post-translational modification Phosphoserine. Positions 1103–1125 are disordered; that stretch reads EIREDEEEVEKKKQKKEKRETGK. Residues 1140–1426 form an III repeat; the sequence is NPIRRACHYI…IFVALIIITF (287 aa). The helical transmembrane segment at 1149–1165 threads the bilayer; sequence IVNLRYFEMCILLVIAA. At 1166-1189 the chain is on the extracellular side; it reads SSIALAAEDPVLTNSERNKVLRYF. A helical transmembrane segment spans residues 1190-1209; the sequence is DYVFTGVFTFEMVIKMIDQG. Residues 1210-1217 are Cytoplasmic-facing; the sequence is LILQDGSY. The chain crosses the membrane as a helical span at residues 1218 to 1240; the sequence is FRDLWNILDFVVVVGALVAFALA. Residues 1241–1254 are Extracellular-facing; the sequence is NALGTNKGRDIKTI. Residues 1255–1272 form a helical membrane-spanning segment; the sequence is KSLRVLRVLRPLKTIKRL. Topologically, residues 1273–1291 are cytoplasmic; that stretch reads PKLKAVFDCVVTSLKNVFN. The helical transmembrane segment at 1292 to 1311 threads the bilayer; the sequence is ILIVYKLFMFIFAVIAVQLF. Residues 1312-1398 are Extracellular-facing; it reads KGKFFYCTDS…RGPSRSNRME (87 aa). Residues 1399 to 1422 form a helical membrane-spanning segment; sequence MSIFYVVYFVVFPFFFVNIFVALI. Residues 1423-1479 lie on the Cytoplasmic side of the membrane; the sequence is IITFQEQGDKMMEECSLEKNERACIDFAISAKPLTRYMPQNRHTFQYRVWHFVVSPS. The IV repeat unit spans residues 1463–1726; the sequence is NRHTFQYRVW…LFVAVIMDNF (264 aa). The chain crosses the membrane as a helical span at residues 1480-1498; sequence FEYTIMAMIALNTVVLMMK. At 1499 to 1513 the chain is on the extracellular side; the sequence is YYSAPCTYELALKYL. The helical transmembrane segment at 1514–1533 threads the bilayer; sequence NIAFTMVFSLECVLKVIAFG. Residues 1534–1541 are Cytoplasmic-facing; that stretch reads FLNYFRDT. Residues 1542–1560 traverse the membrane as a helical segment; sequence WNIFDFITVIGSITEIILT. Residues 1561 to 1571 lie on the Extracellular side of the membrane; it reads DSKLVNTSGFN. N-linked (GlcNAc...) asparagine glycans are attached at residues Asn-1566 and Asn-1571. Residues 1572–1590 form a helical membrane-spanning segment; the sequence is MSFLKLFRAARLIKLLRQG. Residues 1591 to 1609 are Cytoplasmic-facing; that stretch reads YTIRILLWTFVQSFKALPY. Residues 1610 to 1629 form a helical membrane-spanning segment; sequence VCLLIAMLFFIYAIIGMQVF. The Extracellular portion of the chain corresponds to 1630–1698; sequence GNIKLDEESH…NENERCGTDL (69 aa). Residues 1699-1724 traverse the membrane as a helical segment; that stretch reads AYVYFVSFIFFCSFLMLNLFVAVIMD. The Cytoplasmic portion of the chain corresponds to 1725–2313; that stretch reads NFEYLTRDSS…LSDTEEDDKC (589 aa). One can recognise an EF-hand domain in the interval 1739 to 1774; it reads HHLDEFVRVWAEYDRAACGRIHYTEMYEMLTLMSPP. 3 residues coordinate Ca(2+): Asp-1752, Arg-1758, and Glu-1763. 3 disordered regions span residues 1970 to 2170, 2206 to 2225, and 2263 to 2295; these read VSEL…RPLL, CLTESSNSPHPQQSQHASPQ, and SNTIGSAPPLRHSWQMPNGHYRRRRRGGPGPGM. Residues 2012-2023 show a composition bias toward polar residues; the sequence is TDPSSMRRSFST. Over residues 2055 to 2064 the composition is skewed to low complexity; that stretch reads HSSLRLSAHR. A compositionally biased stretch (basic and acidic residues) spans 2065–2085; that stretch reads LNSDSGHKSDTHRSGGRERGR. Ser-2094 and Ser-2113 each carry phosphoserine. A compositionally biased stretch (basic and acidic residues) spans 2101-2118; the sequence is NSEERGTQADWESPERRQ. The span at 2129 to 2152 shows a compositional bias: polar residues; sequence TPNRQGTGSLSESSIPSVSDTSTP. Residues 2210–2225 show a composition bias toward low complexity; sequence SSNSPHPQQSQHASPQ.

This sequence belongs to the calcium channel alpha-1 subunit (TC 1.A.1.11) family. CACNA1E subfamily. In terms of assembly, interacts with EFHC1. Voltage-dependent calcium channels are multisubunit complexes, consisting of alpha-1, alpha-2, beta and delta subunits in a 1:1:1:1 ratio. The channel activity is directed by the pore-forming and voltage-sensitive alpha-1 subunit. In many cases, this subunit is sufficient to generate voltage-sensitive calcium channel activity. The auxiliary subunits beta and alpha-2/delta linked by a disulfide bridge regulate the channel activity. Expressed in neuronal tissues and in kidney.

It localises to the membrane. The catalysed reaction is Ca(2+)(in) = Ca(2+)(out). In terms of biological role, voltage-sensitive calcium channels (VSCC) mediate the entry of calcium ions into excitable cells. They are also involved in a variety of calcium-dependent processes, including muscle contraction, hormone or neurotransmitter release, gene expression, cell motility, cell division and cell death. The isoform alpha-1E gives rise to R-type calcium currents. R-type calcium channels belong to the 'high-voltage activated' (HVA) group and are blocked by nickel. They are however insensitive to dihydropyridines (DHP). Calcium channels containing alpha-1E subunit could be involved in the modulation of firing patterns of neurons which is important for information processing. Functionally, voltage-sensitive calcium channels (VSCC) mediate the entry of calcium ions into excitable cells. They are also involved in a variety of calcium-dependent processes, including muscle contraction, hormone or neurotransmitter release, gene expression, cell motility, cell division and cell death. The isoform alpha-1E gives rise to R-type calcium currents. This Homo sapiens (Human) protein is Voltage-dependent R-type calcium channel subunit alpha-1E (CACNA1E).